We begin with the raw amino-acid sequence, 490 residues long: Glutamyl-tRNA(Gln) amidotransferase subunit A (490 aa).

Active-site charge relay system residues include K81 and S156. Catalysis depends on S180, which acts as the Acyl-ester intermediate.

It belongs to the amidase family. GatA subfamily. As to quaternary structure, heterotrimer of A, B and C subunits.

The enzyme catalyses L-glutamyl-tRNA(Gln) + L-glutamine + ATP + H2O = L-glutaminyl-tRNA(Gln) + L-glutamate + ADP + phosphate + H(+). Its function is as follows. Allows the formation of correctly charged Gln-tRNA(Gln) through the transamidation of misacylated Glu-tRNA(Gln) in organisms which lack glutaminyl-tRNA synthetase. The reaction takes place in the presence of glutamine and ATP through an activated gamma-phospho-Glu-tRNA(Gln). The chain is Glutamyl-tRNA(Gln) amidotransferase subunit A from Nocardia farcinica (strain IFM 10152).